Here is a 287-residue protein sequence, read N- to C-terminus: mRNA-capping enzyme regulatory subunit OPG124 (287 aa).

It belongs to the orthopoxvirus mRNA-capping enzyme regulatory subunit family. As to quaternary structure, interacts with the catalytic subunit OPG113.

Its subcellular location is the virion. Regulatory subunit of the mRNA cap enzyme which stabilizes the catalytic subunit and enhances its methyltransferase activity through an allosteric mechanism. Heterodimeric mRNA capping enzyme catalyzes the linkage of a N7-methyl-guanosine moiety to the first transcribed nucleotide (cap 0 structure), whereas the methyltransferase OPG102 is responsible for a second methylation at the 2'-O position of the ribose (cap 1 structure). Also involved in early viral gene transcription termination and intermediate viral gene transcription initiation. Early gene transcription termination requires the termination factor VTF, the DNA-dependent ATPase NPH-I/OPG123 and the RAP94/OPG109 subunit of the viral RNA polymerase, as well as the presence of a specific termination motif. Binds, together with RAP94/OPG109, to the termination motif 5'-UUUUUNU-3' in the nascent early mRNA. This is mRNA-capping enzyme regulatory subunit OPG124 (OPG124) from Vaccinia virus (strain Copenhagen) (VACV).